Reading from the N-terminus, the 385-residue chain is Glucose-fructose oxidoreductase domain-containing protein 2 (385 aa).

Residues Met-1–Ala-25 form the signal peptide.

The protein belongs to the Gfo/Idh/MocA family.

Its subcellular location is the secreted. It localises to the extracellular space. The protein localises to the extracellular matrix. Functionally, promotes matrix assembly. This is Glucose-fructose oxidoreductase domain-containing protein 2 (GFOD2) from Homo sapiens (Human).